The chain runs to 761 residues: 5-methyltetrahydropteroyltriglutamate--homocysteine methyltransferase (761 aa).

Residues 16-19 (RELK) and Lys-118 each bind 5-methyltetrahydropteroyltri-L-glutamate. L-homocysteine-binding positions include 436–438 (IGS) and Glu-489. Residues 436–438 (IGS) and Glu-489 contribute to the L-methionine site. Residues 520 to 521 (RC) and Trp-566 each bind 5-methyltetrahydropteroyltri-L-glutamate. Residue Asp-604 participates in L-homocysteine binding. L-methionine is bound at residue Asp-604. A 5-methyltetrahydropteroyltri-L-glutamate-binding site is contributed by Glu-610. The Zn(2+) site is built by His-646, Cys-648, and Glu-670. Residue His-699 is the Proton donor of the active site. Cys-731 is a binding site for Zn(2+).

Belongs to the vitamin-B12 independent methionine synthase family. Zn(2+) is required as a cofactor.

It carries out the reaction 5-methyltetrahydropteroyltri-L-glutamate + L-homocysteine = tetrahydropteroyltri-L-glutamate + L-methionine. The protein operates within amino-acid biosynthesis; L-methionine biosynthesis via de novo pathway; L-methionine from L-homocysteine (MetE route): step 1/1. Catalyzes the transfer of a methyl group from 5-methyltetrahydrofolate to homocysteine resulting in methionine formation. This chain is 5-methyltetrahydropteroyltriglutamate--homocysteine methyltransferase, found in Vibrio cholerae serotype O1 (strain ATCC 39315 / El Tor Inaba N16961).